Here is a 958-residue protein sequence, read N- to C-terminus: Transcription factor PfmaH (958 aa).

A DNA-binding region (zn(2)-C6 fungal-type) is located at residues 44–70; sequence CLNCSQAKTGCNKEVPCQRCQDKGLHC. The disordered stretch occupies residues 272–301; it reads EFAGSPSGVSPFGDLSTSNSEPSSSSWGSS. Residues 287 to 301 show a composition bias toward low complexity; that stretch reads STSNSEPSSSSWGSS.

It is found in the nucleus. Its function is as follows. Transcription factor; part of the gene cluster that mediates the biosynthesis of dihydroxynaphthalene (DHN)-melanin, a bluish-green pigment forming a dark layer in the conidial wall that protects the conidia from UV radiations. The 2 transcription factors present in the cluster, PfmaF and PfmaH, coordinately regulate DHN-melanin production. PfmaH acts as a pathway specific regulator to mediate the expression of Pfma cluster genes including PfmaJ, leading to DHN-melanin production in conidia, and regulates the conidial formation. In Pestalotiopsis fici (strain W106-1 / CGMCC3.15140), this protein is Transcription factor PfmaH (PfmaH).